We begin with the raw amino-acid sequence, 231 residues long: Uracil-DNA glycosylase (231 aa).

The Proton acceptor role is filled by Asp74.

Belongs to the uracil-DNA glycosylase (UDG) superfamily. UNG family.

The protein resides in the cytoplasm. The enzyme catalyses Hydrolyzes single-stranded DNA or mismatched double-stranded DNA and polynucleotides, releasing free uracil.. In terms of biological role, excises uracil residues from the DNA which can arise as a result of misincorporation of dUMP residues by DNA polymerase or due to deamination of cytosine. The sequence is that of Uracil-DNA glycosylase from Campylobacter jejuni subsp. jejuni serotype O:23/36 (strain 81-176).